We begin with the raw amino-acid sequence, 404 residues long: Probable tRNA sulfurtransferase (404 aa).

One can recognise a THUMP domain in the interval 61-166 (EAVSERLKDV…SGYSYIMCDE (106 aa)). ATP contacts are provided by residues 184–185 (LL), 209–210 (HF), R266, G288, and Q297.

This sequence belongs to the ThiI family.

The protein resides in the cytoplasm. It carries out the reaction [ThiI sulfur-carrier protein]-S-sulfanyl-L-cysteine + a uridine in tRNA + 2 reduced [2Fe-2S]-[ferredoxin] + ATP + H(+) = [ThiI sulfur-carrier protein]-L-cysteine + a 4-thiouridine in tRNA + 2 oxidized [2Fe-2S]-[ferredoxin] + AMP + diphosphate. The catalysed reaction is [ThiS sulfur-carrier protein]-C-terminal Gly-Gly-AMP + S-sulfanyl-L-cysteinyl-[cysteine desulfurase] + AH2 = [ThiS sulfur-carrier protein]-C-terminal-Gly-aminoethanethioate + L-cysteinyl-[cysteine desulfurase] + A + AMP + 2 H(+). It participates in cofactor biosynthesis; thiamine diphosphate biosynthesis. Catalyzes the ATP-dependent transfer of a sulfur to tRNA to produce 4-thiouridine in position 8 of tRNAs, which functions as a near-UV photosensor. Also catalyzes the transfer of sulfur to the sulfur carrier protein ThiS, forming ThiS-thiocarboxylate. This is a step in the synthesis of thiazole, in the thiamine biosynthesis pathway. The sulfur is donated as persulfide by IscS. The protein is Probable tRNA sulfurtransferase of Bacillus cereus (strain B4264).